We begin with the raw amino-acid sequence, 276 residues long: Putative metal-binding protein CT_415 (276 aa).

A signal peptide spans 1-18 (MRLLFLLLFSLGITCSYG). Residues His-59, His-121, His-185, and Asp-256 each coordinate a divalent metal cation.

It belongs to the bacterial solute-binding protein 9 family.

Its subcellular location is the periplasm. Part of an ATP-binding cassette (ABC) transport system involved in metal import. Binds a metal with high affinity and specificity and delivers it to the membrane permease for translocation into the cytoplasm. This Chlamydia trachomatis serovar D (strain ATCC VR-885 / DSM 19411 / UW-3/Cx) protein is Putative metal-binding protein CT_415.